Consider the following 94-residue polypeptide: Translation initiation factor IF-1 (94 aa).

An S1-like domain is found at 1-72 (MAKEELIQFE…EKGRLIFRHK (72 aa)). Residues 71-94 (HKDERPGGTGAPRSGPPRGQFRRR) are disordered.

The protein belongs to the IF-1 family. As to quaternary structure, component of the 30S ribosomal translation pre-initiation complex which assembles on the 30S ribosome in the order IF-2 and IF-3, IF-1 and N-formylmethionyl-tRNA(fMet); mRNA recruitment can occur at any time during PIC assembly.

It is found in the cytoplasm. Its function is as follows. One of the essential components for the initiation of protein synthesis. Stabilizes the binding of IF-2 and IF-3 on the 30S subunit to which N-formylmethionyl-tRNA(fMet) subsequently binds. Helps modulate mRNA selection, yielding the 30S pre-initiation complex (PIC). Upon addition of the 50S ribosomal subunit IF-1, IF-2 and IF-3 are released leaving the mature 70S translation initiation complex. The sequence is that of Translation initiation factor IF-1 from Rhodopseudomonas palustris (strain HaA2).